A 285-amino-acid polypeptide reads, in one-letter code: Release factor glutamine methyltransferase (285 aa).

S-adenosyl-L-methionine is bound by residues 124–128 (GTGSG), D147, and N190. 190–193 (NPPY) is a binding site for substrate.

The protein belongs to the protein N5-glutamine methyltransferase family. PrmC subfamily.

The catalysed reaction is L-glutaminyl-[peptide chain release factor] + S-adenosyl-L-methionine = N(5)-methyl-L-glutaminyl-[peptide chain release factor] + S-adenosyl-L-homocysteine + H(+). Its function is as follows. Methylates the class 1 translation termination release factors RF1/PrfA and RF2/PrfB on the glutamine residue of the universally conserved GGQ motif. The protein is Release factor glutamine methyltransferase of Flavobacterium psychrophilum (strain ATCC 49511 / DSM 21280 / CIP 103535 / JIP02/86).